The following is a 501-amino-acid chain: Glutamate--tRNA ligase (501 aa).

The 'HIGH' region motif lies at 11 to 21; that stretch reads PSPTGALHIGG. The 'KMSKS' region motif lies at 260–264; sequence KLSKR. Residue Lys-263 coordinates ATP.

The protein belongs to the class-I aminoacyl-tRNA synthetase family. Glutamate--tRNA ligase type 1 subfamily. Monomer.

It localises to the cytoplasm. It catalyses the reaction tRNA(Glu) + L-glutamate + ATP = L-glutamyl-tRNA(Glu) + AMP + diphosphate. Its function is as follows. Catalyzes the attachment of glutamate to tRNA(Glu) in a two-step reaction: glutamate is first activated by ATP to form Glu-AMP and then transferred to the acceptor end of tRNA(Glu). This chain is Glutamate--tRNA ligase, found in Flavobacterium psychrophilum (strain ATCC 49511 / DSM 21280 / CIP 103535 / JIP02/86).